We begin with the raw amino-acid sequence, 402 residues long: 4-hydroxy-3-methylbut-2-enyl diphosphate reductase (402 aa).

Cysteine 66 lines the [4Fe-4S] cluster pocket. Residue histidine 96 participates in (2E)-4-hydroxy-3-methylbut-2-enyl diphosphate binding. Histidine 96 provides a ligand contact to dimethylallyl diphosphate. Histidine 96 contacts isopentenyl diphosphate. Cysteine 157 contributes to the [4Fe-4S] cluster binding site. (2E)-4-hydroxy-3-methylbut-2-enyl diphosphate is bound at residue histidine 185. Histidine 185 is a binding site for dimethylallyl diphosphate. Histidine 185 is an isopentenyl diphosphate binding site. Residue glutamate 187 is the Proton donor of the active site. Position 250 (threonine 250) interacts with (2E)-4-hydroxy-3-methylbut-2-enyl diphosphate. Position 288 (cysteine 288) interacts with [4Fe-4S] cluster. Positions 317, 318, 319, and 379 each coordinate (2E)-4-hydroxy-3-methylbut-2-enyl diphosphate. Dimethylallyl diphosphate is bound by residues serine 317, serine 318, asparagine 319, and serine 379. Residues serine 317, serine 318, asparagine 319, and serine 379 each coordinate isopentenyl diphosphate.

Belongs to the IspH family. [4Fe-4S] cluster is required as a cofactor.

It carries out the reaction isopentenyl diphosphate + 2 oxidized [2Fe-2S]-[ferredoxin] + H2O = (2E)-4-hydroxy-3-methylbut-2-enyl diphosphate + 2 reduced [2Fe-2S]-[ferredoxin] + 2 H(+). The enzyme catalyses dimethylallyl diphosphate + 2 oxidized [2Fe-2S]-[ferredoxin] + H2O = (2E)-4-hydroxy-3-methylbut-2-enyl diphosphate + 2 reduced [2Fe-2S]-[ferredoxin] + 2 H(+). It functions in the pathway isoprenoid biosynthesis; dimethylallyl diphosphate biosynthesis; dimethylallyl diphosphate from (2E)-4-hydroxy-3-methylbutenyl diphosphate: step 1/1. The protein operates within isoprenoid biosynthesis; isopentenyl diphosphate biosynthesis via DXP pathway; isopentenyl diphosphate from 1-deoxy-D-xylulose 5-phosphate: step 6/6. Its function is as follows. Catalyzes the conversion of 1-hydroxy-2-methyl-2-(E)-butenyl 4-diphosphate (HMBPP) into a mixture of isopentenyl diphosphate (IPP) and dimethylallyl diphosphate (DMAPP). Acts in the terminal step of the DOXP/MEP pathway for isoprenoid precursor biosynthesis. This Crocosphaera subtropica (strain ATCC 51142 / BH68) (Cyanothece sp. (strain ATCC 51142)) protein is 4-hydroxy-3-methylbut-2-enyl diphosphate reductase.